Here is a 385-residue protein sequence, read N- to C-terminus: Cellulase CelDZ1 (385 aa).

The chain crosses the membrane as a helical span at residues Ile-6–Ile-26. Substrate-binding positions include His-87, Trp-91–Phe-92, Tyr-118, and His-153. The Proton donor role is filled by Glu-192. Tyr-261 contributes to the substrate binding site. The Nucleophile role is filled by Glu-294. Substrate contacts are provided by residues Ala-300–Ser-301, Trp-328, and Lys-333–Glu-335.

Belongs to the glycosyl hydrolase 5 (cellulase A) family. Monomer.

The protein localises to the cell membrane. It catalyses the reaction Endohydrolysis of (1-&gt;4)-beta-D-glucosidic linkages in cellulose, lichenin and cereal beta-D-glucans.. Activity is enhanced by 1mM Mn(2+), but is not affected by 1mM Ca(2+), Mg(2+), Zn(2+), K(+), Na(+) or Li(+). Activity is not inhibited by EDTA (in vitro). Thermostable endoglucanase that has high activity with soluble polymeric substrates containing beta-1,4-glycosidic bonds, such as carboxymethyl cellulose (CMC) and barley beta-D-glucan (in vitro). Has no activity with cellobiose and filter paper. Has no activity with substrates containing beta-1,3-linked glycans, such as laminarin. Likewise, lacks activity with xylan, galactomannan and pectin. In Thermoanaerobacterium sp, this protein is Cellulase CelDZ1.